The sequence spans 273 residues: WIMGYMVNAIYQIDEFVNLGANSIETDVSFDDNANPEYTYHGIPCDCGRSCLKWENYNDFLKGLRSATTPGNSKYQSKLILVVFDLKTGSLYDNQASEAGKKLAKNLLKHYWNNGNNGGRAYIVLSIPDLNHYPLIKGFTDTLKQEGHPELLEKVGYDFSGNDAIGDVAKAYKKAGVSGHVWQSDGITNCLLRGLSRVKDAVANRDSGKGYINKVYYWTVDKRATTRDALDAGVDGVMTNYPDVIADVMNEAAYKNKVRLATYEDSPWVTFKK.

2 residues coordinate Mg(2+): glutamate 25 and aspartate 27. Histidine 41 functions as the Nucleophile in the catalytic mechanism. 2 disulfide bridges follow: cysteine 45-cysteine 51 and cysteine 47-cysteine 190. Mg(2+) is bound at residue aspartate 85.

This sequence belongs to the arthropod phospholipase D family. Class II subfamily. It depends on Mg(2+) as a cofactor. In terms of tissue distribution, expressed by the venom gland.

The protein localises to the secreted. It catalyses the reaction an N-(acyl)-sphingosylphosphocholine = an N-(acyl)-sphingosyl-1,3-cyclic phosphate + choline. The enzyme catalyses an N-(acyl)-sphingosylphosphoethanolamine = an N-(acyl)-sphingosyl-1,3-cyclic phosphate + ethanolamine. It carries out the reaction a 1-acyl-sn-glycero-3-phosphocholine = a 1-acyl-sn-glycero-2,3-cyclic phosphate + choline. The catalysed reaction is a 1-acyl-sn-glycero-3-phosphoethanolamine = a 1-acyl-sn-glycero-2,3-cyclic phosphate + ethanolamine. Functionally, dermonecrotic toxins cleave the phosphodiester linkage between the phosphate and headgroup of certain phospholipids (sphingolipid and lysolipid substrates), forming an alcohol (often choline) and a cyclic phosphate. This toxin acts on sphingomyelin (SM). It may also act on ceramide phosphoethanolamine (CPE), lysophosphatidylcholine (LPC) and lysophosphatidylethanolamine (LPE), but not on lysophosphatidylserine (LPS), and lysophosphatidylglycerol (LPG). It acts by transphosphatidylation, releasing exclusively cyclic phosphate products as second products. Induces dermonecrosis, hemolysis, increased vascular permeability, edema, inflammatory response, and platelet aggregation. This Loxosceles hirsuta (Recluse spider) protein is Dermonecrotic toxin LhSicTox-alphaIA2bi.